The chain runs to 41 residues: Large ribosomal subunit protein bL36 (41 aa).

It belongs to the bacterial ribosomal protein bL36 family.

In Agrobacterium fabrum (strain C58 / ATCC 33970) (Agrobacterium tumefaciens (strain C58)), this protein is Large ribosomal subunit protein bL36 (rpmJ).